The primary structure comprises 105 residues: Large ribosomal subunit protein uL24 (105 aa).

It belongs to the universal ribosomal protein uL24 family. In terms of assembly, part of the 50S ribosomal subunit.

Functionally, one of two assembly initiator proteins, it binds directly to the 5'-end of the 23S rRNA, where it nucleates assembly of the 50S subunit. One of the proteins that surrounds the polypeptide exit tunnel on the outside of the subunit. This Rhizorhabdus wittichii (strain DSM 6014 / CCUG 31198 / JCM 15750 / NBRC 105917 / EY 4224 / RW1) (Sphingomonas wittichii) protein is Large ribosomal subunit protein uL24.